The primary structure comprises 93 residues: Small ribosomal subunit protein uS19 (93 aa).

It belongs to the universal ribosomal protein uS19 family.

Protein S19 forms a complex with S13 that binds strongly to the 16S ribosomal RNA. The polypeptide is Small ribosomal subunit protein uS19 (Synechococcus sp. (strain JA-3-3Ab) (Cyanobacteria bacterium Yellowstone A-Prime)).